The sequence spans 278 residues: MDLASKYFNGVNWRYIDHSSGLEPMQSFAFDDTFCESVGKDISDNVVRTWIHQHTVILGIHDSRLPFLKDGIDYLTNEIGYNAIVRNSGGLGVVLDQGVLNISLMFKGQTETTIDEAFTVMYLLISKMFENENVDIDTMEIEHSYCPGKFDLSIDGKKFAGISQRRVRGGIAVQIYLCVEGSGSERALMMQTFYEHALKGEVTKFKYPEIEPSCMASLETLLNKTITVQDVMFLLLYAIKDLGGVLNMTPITQEEWQRYDTYFDKMIERNKKMIDQMQ.

Residues 41–247 (DISDNVVRTW…AIKDLGGVLN (207 aa)) form the BPL/LPL catalytic domain. Cys-146 acts as the Acyl-thioester intermediate in catalysis.

Belongs to the octanoyltransferase LipL family.

It carries out the reaction N(6)-octanoyl-L-lysyl-[glycine-cleavage complex H protein] + L-lysyl-[lipoyl-carrier protein] = N(6)-octanoyl-L-lysyl-[lipoyl-carrier protein] + L-lysyl-[glycine-cleavage complex H protein]. It functions in the pathway protein modification; protein lipoylation via endogenous pathway; protein N(6)-(lipoyl)lysine from octanoyl-[acyl-carrier-protein]. Catalyzes the amidotransfer (transamidation) of the octanoyl moiety from octanoyl-GcvH to the lipoyl domain of the E2 subunit of lipoate-dependent enzymes. The chain is Octanoyl-[GcvH]:protein N-octanoyltransferase from Staphylococcus aureus (strain NCTC 8325 / PS 47).